A 938-amino-acid chain; its full sequence is ATP-dependent 6-phosphofructokinase subunit beta (938 aa).

The N-terminal catalytic PFK domain 1 stretch occupies residues 1–552; it reads MTQSLPLLNG…HLDNFMAINS (552 aa). ATP contacts are provided by residues Gly185, 249–250, and 279–282; these read RC and GDGS. Asp280 is a Mg(2+) binding site. Beta-D-fructose 6-phosphate is bound by residues 325–327, Arg362, 369–371, Glu426, Arg454, and 460–463; these read SID, MGR, and HVQR. Asp327 functions as the Proton acceptor in the catalytic mechanism. An interdomain linker region spans residues 553 to 566; sequence ADHIEPKLPEHTHM. Positions 567-938 are C-terminal regulatory PFK domain 2; that stretch reads KIAIVNVGAP…ADHLVGRKKL (372 aa). Residues Arg637, 695-699, Arg733, 740-742, Lys826, 832-835, and Arg915 each bind beta-D-fructose 2,6-bisphosphate; these read TLSNN, QGG, and HVQQ.

It belongs to the phosphofructokinase type A (PFKA) family. ATP-dependent PFK group I subfamily. Eukaryotic two domain clade 'E' sub-subfamily. As to quaternary structure, heterooctamer of 4 alpha and 4 beta chains. Mg(2+) is required as a cofactor.

The protein localises to the cytoplasm. It catalyses the reaction beta-D-fructose 6-phosphate + ATP = beta-D-fructose 1,6-bisphosphate + ADP + H(+). It functions in the pathway carbohydrate degradation; glycolysis; D-glyceraldehyde 3-phosphate and glycerone phosphate from D-glucose: step 3/4. With respect to regulation, allosterically activated by ADP, AMP, or fructose 2,6-bisphosphate, and allosterically inhibited by ATP or citrate. In terms of biological role, catalyzes the phosphorylation of D-fructose 6-phosphate to fructose 1,6-bisphosphate by ATP, the first committing step of glycolysis. The chain is ATP-dependent 6-phosphofructokinase subunit beta (PFK2) from Kluyveromyces lactis (strain ATCC 8585 / CBS 2359 / DSM 70799 / NBRC 1267 / NRRL Y-1140 / WM37) (Yeast).